A 428-amino-acid polypeptide reads, in one-letter code: D-amino acid dehydrogenase (428 aa).

FAD is bound at residue 3–17 (VVVLGSGVVGVTSAY).

This sequence belongs to the DadA oxidoreductase family. It depends on FAD as a cofactor.

It catalyses the reaction a D-alpha-amino acid + A + H2O = a 2-oxocarboxylate + AH2 + NH4(+). Its pathway is amino-acid degradation; D-alanine degradation; NH(3) and pyruvate from D-alanine: step 1/1. In terms of biological role, oxidative deamination of D-amino acids. The sequence is that of D-amino acid dehydrogenase from Paraburkholderia phymatum (strain DSM 17167 / CIP 108236 / LMG 21445 / STM815) (Burkholderia phymatum).